The sequence spans 256 residues: DNA repair protein RecO (256 aa).

Belongs to the RecO family.

In terms of biological role, involved in DNA repair and RecF pathway recombination. The chain is DNA repair protein RecO from Anaeromyxobacter sp. (strain Fw109-5).